Reading from the N-terminus, the 418-residue chain is Serine hydroxymethyltransferase (418 aa).

(6S)-5,6,7,8-tetrahydrofolate is bound by residues Leu120 and 124 to 126; that span reads GHL. Lys229 is modified (N6-(pyridoxal phosphate)lysine).

This sequence belongs to the SHMT family. As to quaternary structure, homodimer. Pyridoxal 5'-phosphate serves as cofactor.

It localises to the cytoplasm. It catalyses the reaction (6R)-5,10-methylene-5,6,7,8-tetrahydrofolate + glycine + H2O = (6S)-5,6,7,8-tetrahydrofolate + L-serine. The protein operates within one-carbon metabolism; tetrahydrofolate interconversion. It functions in the pathway amino-acid biosynthesis; glycine biosynthesis; glycine from L-serine: step 1/1. In terms of biological role, catalyzes the reversible interconversion of serine and glycine with tetrahydrofolate (THF) serving as the one-carbon carrier. This reaction serves as the major source of one-carbon groups required for the biosynthesis of purines, thymidylate, methionine, and other important biomolecules. Also exhibits THF-independent aldolase activity toward beta-hydroxyamino acids, producing glycine and aldehydes, via a retro-aldol mechanism. The sequence is that of Serine hydroxymethyltransferase from Myxococcus xanthus (strain DK1622).